The chain runs to 478 residues: Membrane-bound lytic murein transglycosylase F (478 aa).

The first 22 residues, 1 to 22, serve as a signal peptide directing secretion; it reads MTRFLFAIILGFLLTACQQVTV. A non-LT domain region spans residues 23 to 257; sequence EETEYVPHKL…HLNEKYFGHV (235 aa). The tract at residues 258–478 is LT domain; that stretch reads KRFDYIDTRA…PGTLSPDKPK (221 aa). Glu302 is a catalytic residue. A disordered region spans residues 446-478; the sequence is SKQQNSDEEEPSDLASEDGPAPVPGTLSPDKPK. Residues 451–461 show a composition bias toward acidic residues; that stretch reads SDEEEPSDLAS.

This sequence in the N-terminal section; belongs to the bacterial solute-binding protein 3 family. In the C-terminal section; belongs to the transglycosylase Slt family.

It is found in the cell outer membrane. The enzyme catalyses Exolytic cleavage of the (1-&gt;4)-beta-glycosidic linkage between N-acetylmuramic acid (MurNAc) and N-acetylglucosamine (GlcNAc) residues in peptidoglycan, from either the reducing or the non-reducing ends of the peptidoglycan chains, with concomitant formation of a 1,6-anhydrobond in the MurNAc residue.. Its function is as follows. Murein-degrading enzyme that degrades murein glycan strands and insoluble, high-molecular weight murein sacculi, with the concomitant formation of a 1,6-anhydromuramoyl product. Lytic transglycosylases (LTs) play an integral role in the metabolism of the peptidoglycan (PG) sacculus. Their lytic action creates space within the PG sacculus to allow for its expansion as well as for the insertion of various structures such as secretion systems and flagella. The polypeptide is Membrane-bound lytic murein transglycosylase F (Shewanella sp. (strain ANA-3)).